The following is a 335-amino-acid chain: Phosphatidate cytidylyltransferase, mitochondrial (335 aa).

It belongs to the TAM41 family. Mg(2+) is required as a cofactor.

The protein resides in the mitochondrion inner membrane. The catalysed reaction is a 1,2-diacyl-sn-glycero-3-phosphate + CTP + H(+) = a CDP-1,2-diacyl-sn-glycerol + diphosphate. It functions in the pathway phospholipid metabolism; CDP-diacylglycerol biosynthesis; CDP-diacylglycerol from sn-glycerol 3-phosphate: step 3/3. In terms of biological role, catalyzes the conversion of phosphatidic acid (PA) to CDP-diacylglycerol (CDP-DAG), an essential intermediate in the synthesis of phosphatidylglycerol, cardiolipin and phosphatidylinositol. This is Phosphatidate cytidylyltransferase, mitochondrial (TAMM41) from Bos taurus (Bovine).